We begin with the raw amino-acid sequence, 460 residues long: Nucleosome assembly protein 1-like 2 (460 aa).

Residues 1–11 (MAESVDHKELS) show a composition bias toward basic and acidic residues. Disordered regions lie at residues 1–87 (MAES…DSDR) and 213–238 (DEEEEEEEDDSAGATGGEEVNEEDPK). The span at 213–223 (DEEEEEEEDDS) shows a compositional bias: acidic residues. The Nuclear localization signal motif lies at 346-352 (IKKKQRH).

The protein belongs to the nucleosome assembly protein (NAP) family. In terms of tissue distribution, brain, specifically expressed in neurons.

It is found in the nucleus. Its function is as follows. Acidic protein which may be involved in interactions with other proteins or DNA. This is Nucleosome assembly protein 1-like 2 (Nap1l2) from Mus musculus (Mouse).